The following is a 290-amino-acid chain: Acetyl-coenzyme A carboxylase carboxyl transferase subunit beta (290 aa).

A CoA carboxyltransferase N-terminal domain is found at 28-290 (IMTKCPKCKK…TGGDIEWLQD (263 aa)). 4 residues coordinate Zn(2+): cysteine 32, cysteine 35, cysteine 51, and cysteine 54. The segment at 32–54 (CPKCKKIMLTKELDKNMRVCMNC) adopts a C4-type zinc-finger fold.

It belongs to the AccD/PCCB family. As to quaternary structure, acetyl-CoA carboxylase is a heterohexamer composed of biotin carboxyl carrier protein (AccB), biotin carboxylase (AccC) and two subunits each of ACCase subunit alpha (AccA) and ACCase subunit beta (AccD). It depends on Zn(2+) as a cofactor.

The protein resides in the cytoplasm. The enzyme catalyses N(6)-carboxybiotinyl-L-lysyl-[protein] + acetyl-CoA = N(6)-biotinyl-L-lysyl-[protein] + malonyl-CoA. It functions in the pathway lipid metabolism; malonyl-CoA biosynthesis; malonyl-CoA from acetyl-CoA: step 1/1. Inhibited by pyrrolidine dione antibiotics moiramide B (CPD1) and CPD2. Functionally, component of the acetyl coenzyme A carboxylase (ACC) complex. Biotin carboxylase (BC) catalyzes the carboxylation of biotin on its carrier protein (BCCP) and then the CO(2) group is transferred by the transcarboxylase to acetyl-CoA to form malonyl-CoA. The protein is Acetyl-coenzyme A carboxylase carboxyl transferase subunit beta of Bacillus subtilis (strain 168).